Consider the following 146-residue polypeptide: Small ribosomal subunit protein uS15 (146 aa).

Belongs to the universal ribosomal protein uS15 family. Part of the 30S ribosomal subunit.

The protein is Small ribosomal subunit protein uS15 of Picrophilus torridus (strain ATCC 700027 / DSM 9790 / JCM 10055 / NBRC 100828 / KAW 2/3).